The following is a 202-amino-acid chain: uncharacterized protein (202 aa).

This is an uncharacterized protein from Galliformes (FAdV-1).